A 543-amino-acid polypeptide reads, in one-letter code: CTP synthase (543 aa).

The amidoligase domain stretch occupies residues 1 to 266; that stretch reads MTKFIFVTGG…DDIICERFGI (266 aa). S13 is a binding site for CTP. S13 contributes to the UTP binding site. ATP-binding positions include 14 to 19 and D71; that span reads SLGKGI. Residues D71 and E140 each contribute to the Mg(2+) site. Residues 147-149, 187-192, and K223 contribute to the CTP site; these read DIE and KTKPTQ. Residues 187–192 and K223 each bind UTP; that span reads KTKPTQ. The region spanning 291–543 is the Glutamine amidotransferase type-1 domain; the sequence is TVAIVGKYVE…VKAAIDHQNI (253 aa). L-glutamine is bound at residue G354. Residue C381 is the Nucleophile; for glutamine hydrolysis of the active site. L-glutamine is bound by residues 382–385, E404, and R471; that span reads LGMQ. Residues H516 and E518 contribute to the active site.

The protein belongs to the CTP synthase family. In terms of assembly, homotetramer.

The catalysed reaction is UTP + L-glutamine + ATP + H2O = CTP + L-glutamate + ADP + phosphate + 2 H(+). It catalyses the reaction L-glutamine + H2O = L-glutamate + NH4(+). The enzyme catalyses UTP + NH4(+) + ATP = CTP + ADP + phosphate + 2 H(+). Its pathway is pyrimidine metabolism; CTP biosynthesis via de novo pathway; CTP from UDP: step 2/2. Its activity is regulated as follows. Allosterically activated by GTP, when glutamine is the substrate; GTP has no effect on the reaction when ammonia is the substrate. The allosteric effector GTP functions by stabilizing the protein conformation that binds the tetrahedral intermediate(s) formed during glutamine hydrolysis. Inhibited by the product CTP, via allosteric rather than competitive inhibition. Functionally, catalyzes the ATP-dependent amination of UTP to CTP with either L-glutamine or ammonia as the source of nitrogen. Regulates intracellular CTP levels through interactions with the four ribonucleotide triphosphates. The protein is CTP synthase of Psychrobacter sp. (strain PRwf-1).